The chain runs to 178 residues: MGLIMAKLFQSWWIGKKYKIIVVGLDNAGKTTILYNYVTKDQVETKPTIGSNVEEVSYRNLDFVIWDIGGQESLRKSWSTYYVQTDVVIVVIDSSDTTRIPIMKEQLHNMLQHEDLARAHILVLANKQDLPGAMNPAEVSTQLGLQTLRGARKWQINGCCAVKGEGLPEALEWIANNL.

Glycine 2 is lipidated: N-myristoyl glycine. GTP is bound by residues 24–31 (GLDNAGKT), 67–71 (DIGGQ), and 126–129 (NKQD).

This sequence belongs to the small GTPase superfamily. Arf family.

The protein resides in the golgi apparatus. Its function is as follows. GTP-binding protein that may be involved in protein trafficking; may modulate vesicle budding and uncoating within the Golgi apparatus. Plays a role in the shedding of pathogen spores from intestinal cells. In Caenorhabditis elegans, this protein is ADP-ribosylation factor-like protein 5 (arl-5).